Reading from the N-terminus, the 322-residue chain is Aspartate carbamoyltransferase catalytic subunit (322 aa).

Carbamoyl phosphate is bound by residues R70 and T71. K98 is a binding site for L-aspartate. Residues R120, H150, and Q153 each coordinate carbamoyl phosphate. Residues R184 and R239 each contribute to the L-aspartate site. 2 residues coordinate carbamoyl phosphate: G280 and P281.

Belongs to the aspartate/ornithine carbamoyltransferase superfamily. ATCase family. In terms of assembly, heterododecamer (2C3:3R2) of six catalytic PyrB chains organized as two trimers (C3), and six regulatory PyrI chains organized as three dimers (R2).

The catalysed reaction is carbamoyl phosphate + L-aspartate = N-carbamoyl-L-aspartate + phosphate + H(+). Its pathway is pyrimidine metabolism; UMP biosynthesis via de novo pathway; (S)-dihydroorotate from bicarbonate: step 2/3. Its function is as follows. Catalyzes the condensation of carbamoyl phosphate and aspartate to form carbamoyl aspartate and inorganic phosphate, the committed step in the de novo pyrimidine nucleotide biosynthesis pathway. This is Aspartate carbamoyltransferase catalytic subunit from Xylella fastidiosa (strain 9a5c).